A 328-amino-acid polypeptide reads, in one-letter code: Chlorate reductase subunit beta (328 aa).

3 4Fe-4S ferredoxin-type domains span residues 6–35 (VAYV…RDGR), 125–156 (NHSF…KRPE), and 158–187 (GIVV…FNLQ). Residues Cys-15, Cys-18, Cys-21, Cys-25, Cys-134, Cys-137, and Cys-142 each contribute to the [4Fe-4S] cluster site. The [3Fe-4S] cluster site is built by Cys-146, Cys-167, and Cys-173. [4Fe-4S] cluster contacts are provided by Cys-177, Cys-194, Cys-197, Cys-209, and Cys-213.

As to quaternary structure, heterotrimer of alpha, beta and gamma subunits. Requires [3Fe-4S] cluster as cofactor. [4Fe-4S] cluster serves as cofactor.

The protein localises to the periplasm. Functionally, electron transfer subunit of the terminal reductase during anaerobic growth on chlorate. This is Chlorate reductase subunit beta (clrB) from Ideonella dechloratans.